Reading from the N-terminus, the 476-residue chain is Adenosylhomocysteinase (476 aa).

The substrate site is built by Thr67, Asp142, and Glu202. 203–205 contributes to the NAD(+) binding site; it reads TTT. Lys232 and Asp236 together coordinate substrate. Residues Asn237, 266–271, Glu289, Asn324, 345–347, and Asn390 contribute to the NAD(+) site; these read GYGDVG and IGH.

The protein belongs to the adenosylhomocysteinase family. NAD(+) serves as cofactor.

Its subcellular location is the cytoplasm. It catalyses the reaction S-adenosyl-L-homocysteine + H2O = L-homocysteine + adenosine. It functions in the pathway amino-acid biosynthesis; L-homocysteine biosynthesis; L-homocysteine from S-adenosyl-L-homocysteine: step 1/1. In terms of biological role, may play a key role in the regulation of the intracellular concentration of adenosylhomocysteine. This Synechococcus sp. (strain CC9311) protein is Adenosylhomocysteinase.